The primary structure comprises 228 residues: Cytochrome P450 monooxygenase ataY (228 aa).

Residue Cys-216 participates in heme binding.

This sequence belongs to the cytochrome P450 family. It depends on heme as a cofactor.

Its pathway is mycotoxin biosynthesis. Its function is as follows. Cytochrome P450 monooxygenase; part of the gene cluster that mediates the biosynthesis of acetylaranotin, a member of the epipolythiodioxopiperazine (ETP) class of toxins characterized by a disulfide-bridged cyclic dipeptide. The first step of acetylaranotin biosynthesis is performed by the NRPS ataP which produces diketopiperazine cyclo-L-Phe-L-Phe via the condensation of 2 phenylalanines (L-Phe). The ataC domain of ataTC then catalyzes the formation of bishydroxylation of cyclo-L-Phe-L-Phe. The glutathione S-transferase domain ataG in ataIMG further catalyzes the conjugation of two glutathiones to the bishydroxylated intermediate. Next, the dipeptidase ataJ removes the Glu residues. The following step is performed by the carbon sulfur lyase domain ataI of ataIMG which may convert the bis-cysteinyl adduct to yield an epidithiol intermediate. The ataT domain from ataTC then catalyzes the oxidation of the free dithiols, followed by a cyclization step catalyzed by the cytochrome P450 ataF. AtaF probably acts as an epoxidase to promote a dual epoxidation formation at C8 and C9 along with C8' and C9', followed by the spontaneous nucleophilic attack of the amide nitrogens N10 and N10' to yield an intermediate with the pyrrolidine partial structure. The final steps of acetylaranotin biosynthesis involve the acetylation and ring rearrangement of an epitetrathiodiketopiperazine intermediate to produce acetylaranotin. AtaH probably catalyzes the acetylation of epitetrathiodiketopiperazine to produce a diacetate and ataY is responsible for the formation of the dihydrooxepin moiety that converts the diacetate intermediate to acetylaranotin via acetylapoaranotin. Both enzymes could function independently in the absence of the other. The acetylaranotin bis-thiomethyltransferase ataS located outside of acetylaranotin gene cluster is the main thiomethyltransferase responsible for converting acetylaranotin and its related intermediates to their methylated forms. This Aspergillus terreus (strain NIH 2624 / FGSC A1156) protein is Cytochrome P450 monooxygenase ataY.